We begin with the raw amino-acid sequence, 99 residues long: Nucleoid-associated protein str1598 (99 aa).

The protein belongs to the YbaB/EbfC family. As to quaternary structure, homodimer.

It is found in the cytoplasm. The protein resides in the nucleoid. Binds to DNA and alters its conformation. May be involved in regulation of gene expression, nucleoid organization and DNA protection. In Streptococcus thermophilus (strain CNRZ 1066), this protein is Nucleoid-associated protein str1598.